The chain runs to 104 residues: Protein ArtA (104 aa).

This is Protein ArtA (artA) from Escherichia coli (strain K12).